Consider the following 520-residue polypeptide: Cytochrome P450 72A397 (520 aa).

A helical transmembrane segment spans residues 14–34; the sequence is AVAVAVVVVGWAWKVLNWVWV. Position 468 (cysteine 468) interacts with heme.

The protein belongs to the cytochrome P450 family. Heme is required as a cofactor.

Its subcellular location is the membrane. The enzyme catalyses oleanolate + reduced [NADPH--hemoprotein reductase] + O2 = hederagenin + oxidized [NADPH--hemoprotein reductase] + H2O + H(+). Its function is as follows. Catalyzes the oxidation of oleanolate at the C-23 position to form hederagenin. The polypeptide is Cytochrome P450 72A397 (Kalopanax septemlobus (Castor aralia)).